Reading from the N-terminus, the 449-residue chain is SWI/SNF chromatin-remodeling accessory subunit 2 (449 aa).

Residues 1 to 11 are compositionally biased toward polar residues; that stretch reads MHSQQRPNPQM. Residues 1–56 are disordered; the sequence is MHSQQRPNPQMNRHPYGTPGSAPQMRRPGGFAGQPPQMHGPRMVAPPAAPLPKKKK. Positions 223-300 constitute an SWIB/MDM2 domain; that stretch reads NHPAKFKLHP…PNKLHQLLQQ (78 aa).

The protein belongs to the SMARCD family. In terms of assembly, component of the multiprotein chromatin-remodeling complexes SWI/SNF: SWI/SNF-A (BAF), SWI/SNF-B (PBAF) and related complexes. The canonical complex contains a catalytic subunit swsn-4, core subunits swsn-1 and swsn-5, and accessory subunits swsn-3, swsn-6, phf-10, dpff-1, swsn-9 and either ham-3/swsn-2.1 or swsn-2.2.

It localises to the nucleus. It is found in the nucleoplasm. The protein resides in the chromosome. The protein localises to the nucleus envelope. Functionally, involved in transcriptional activation and repression of select genes by chromatin remodeling (alteration of DNA-nucleosome topology). Component of SWI/SNF chromatin remodeling complexes that carry out key enzymatic activities, changing chromatin structure by altering DNA-histone contacts within a nucleosome in an ATP-dependent manner. Probably regulates vulva development through the let-60/Ras pathway. Involved in nuclear reassembly after mitosis and recruitment of nuclear envelope protein, mel-28, to the nuclear periphery in the early embryo and in the adult germline. Involved in gonadogenesis. The sequence is that of SWI/SNF chromatin-remodeling accessory subunit 2 from Caenorhabditis elegans.